The primary structure comprises 211 residues: MARKRRAARVKDKWTLKKWFTLIAPEYFGMAELGETPADDASKVVGRTVETTLAELTNDYSNQNTYKKLIFKVYRVAGDNAYTKFWRFELTREYLNSLTRRRTSKIEDIVDVTTADGYKLRVKSVVFTVRRCKTSQKRAIRAIMRQIVVEKASSLNFVQFLQECVLGKVPAEIYKNAKKIYPIRRVEIRKIELLAEPAEAETQPAVAEAVA.

It belongs to the eukaryotic ribosomal protein eS1 family.

This is Small ribosomal subunit protein eS1 from Archaeoglobus fulgidus (strain ATCC 49558 / DSM 4304 / JCM 9628 / NBRC 100126 / VC-16).